The primary structure comprises 450 residues: Adenosylhomocysteinase (450 aa).

Substrate contacts are provided by threonine 59, aspartate 135, and glutamate 160. An NAD(+)-binding site is contributed by 161 to 163; that stretch reads TTT. 2 residues coordinate substrate: lysine 190 and aspartate 194. NAD(+) contacts are provided by residues asparagine 195, 224-229, glutamate 247, 303-305, and asparagine 350; these read GFGDVG and IGH.

This sequence belongs to the adenosylhomocysteinase family. NAD(+) serves as cofactor.

It localises to the cytoplasm. The enzyme catalyses S-adenosyl-L-homocysteine + H2O = L-homocysteine + adenosine. The protein operates within amino-acid biosynthesis; L-homocysteine biosynthesis; L-homocysteine from S-adenosyl-L-homocysteine: step 1/1. Functionally, adenosylhomocysteine is a competitive inhibitor of S-adenosyl-L-methionine-dependent methyl transferase reactions; therefore adenosylhomocysteinase may play a key role in the control of methylations via regulation of the intracellular concentration of adenosylhomocysteine. The chain is Adenosylhomocysteinase (SAH1) from Candida albicans (strain SC5314 / ATCC MYA-2876) (Yeast).